Here is a 156-residue protein sequence, read N- to C-terminus: SsrA-binding protein (156 aa).

Belongs to the SmpB family.

It localises to the cytoplasm. Required for rescue of stalled ribosomes mediated by trans-translation. Binds to transfer-messenger RNA (tmRNA), required for stable association of tmRNA with ribosomes. tmRNA and SmpB together mimic tRNA shape, replacing the anticodon stem-loop with SmpB. tmRNA is encoded by the ssrA gene; the 2 termini fold to resemble tRNA(Ala) and it encodes a 'tag peptide', a short internal open reading frame. During trans-translation Ala-aminoacylated tmRNA acts like a tRNA, entering the A-site of stalled ribosomes, displacing the stalled mRNA. The ribosome then switches to translate the ORF on the tmRNA; the nascent peptide is terminated with the 'tag peptide' encoded by the tmRNA and targeted for degradation. The ribosome is freed to recommence translation, which seems to be the essential function of trans-translation. In Bacillus velezensis (strain DSM 23117 / BGSC 10A6 / LMG 26770 / FZB42) (Bacillus amyloliquefaciens subsp. plantarum), this protein is SsrA-binding protein.